The primary structure comprises 87 residues: Large ribosomal subunit protein eL33 (87 aa).

This sequence belongs to the eukaryotic ribosomal protein eL33 family.

The protein is Large ribosomal subunit protein eL33 of Pyrococcus horikoshii (strain ATCC 700860 / DSM 12428 / JCM 9974 / NBRC 100139 / OT-3).